Here is a 298-residue protein sequence, read N- to C-terminus: Glutamyl-Q tRNA(Asp) synthetase (298 aa).

L-glutamate-binding positions include 9–13 and Glu-45; that span reads RFAPS. A 'HIGH' region motif is present at residues 12–22; that stretch reads PSPSGELHFGS. Cys-101, Cys-103, Tyr-115, and Cys-119 together coordinate Zn(2+). The L-glutamate site is built by Tyr-172 and Arg-190. Residues 228-232 carry the 'KMSKS' region motif; the sequence is KLSKQ. ATP is bound at residue Lys-231.

This sequence belongs to the class-I aminoacyl-tRNA synthetase family. GluQ subfamily. It depends on Zn(2+) as a cofactor.

Functionally, catalyzes the tRNA-independent activation of glutamate in presence of ATP and the subsequent transfer of glutamate onto a tRNA(Asp). Glutamate is transferred on the 2-amino-5-(4,5-dihydroxy-2-cyclopenten-1-yl) moiety of the queuosine in the wobble position of the QUC anticodon. The sequence is that of Glutamyl-Q tRNA(Asp) synthetase from Citrobacter koseri (strain ATCC BAA-895 / CDC 4225-83 / SGSC4696).